A 118-amino-acid chain; its full sequence is Large ribosomal subunit protein bL20 (118 aa).

Belongs to the bacterial ribosomal protein bL20 family.

Its function is as follows. Binds directly to 23S ribosomal RNA and is necessary for the in vitro assembly process of the 50S ribosomal subunit. It is not involved in the protein synthesizing functions of that subunit. The chain is Large ribosomal subunit protein bL20 from Lactobacillus delbrueckii subsp. bulgaricus (strain ATCC BAA-365 / Lb-18).